The sequence spans 363 residues: MKIGVFVPIGNNGWLISTHAPQYMPTFELNKAIVQKAEHYHFDFALSMIKLRGFGGKTEFWDHNLESFTLMAGLAAVTSRIQIYATAATLTLPPAIVARMAATIDSISGGRFGVNLVTGWQKPEYEQMGIWPGDDYFSRRYDYLTEYVQVLRDLWGSGKSDFKGDFFTMDDCRVSPQPSVPMKVICAGQSDAGMAFSARYADFNFCFGKGVNTPTAFAPTAARMKQAAEQTGRDVGSYVLFMVIADETDDAARAKWEHYKAGADEEALSWLTEQSQKDTRSGTDTNVRQMADPTSAVNINMGTLVGSYASVARMLDEVATVPGAEGVLLTFDDFLSGIENFGERIQPLMQCRAHLPALTQEVA.

FMN is bound by residues Ile-49–Lys-50, Asn-115, Glu-124, Arg-140–Tyr-141, and Ser-190.

This sequence belongs to the NtaA/SnaA/DszA monooxygenase family. RutA subfamily.

The enzyme catalyses uracil + FMNH2 + NADH + O2 = (Z)-3-ureidoacrylate + FMN + NAD(+) + H2O + H(+). It catalyses the reaction thymine + FMNH2 + NADH + O2 = (Z)-2-methylureidoacrylate + FMN + NAD(+) + H2O + H(+). Functionally, catalyzes the pyrimidine ring opening between N-3 and C-4 by an unusual flavin hydroperoxide-catalyzed mechanism, adding oxygen atoms in the process to yield ureidoacrylate peracid, that immediately reacts with FMN forming ureidoacrylate and FMN-N(5)-oxide. The FMN-N(5)-oxide reacts spontaneously with NADH to produce FMN. Requires the flavin reductase RutF to regenerate FMN in vivo. This chain is Pyrimidine monooxygenase RutA, found in Escherichia coli (strain SMS-3-5 / SECEC).